Here is a 354-residue protein sequence, read N- to C-terminus: UDP-N-acetylglucosamine--N-acetylmuramyl-(pentapeptide) pyrophosphoryl-undecaprenol N-acetylglucosamine transferase (354 aa).

UDP-N-acetyl-alpha-D-glucosamine contacts are provided by residues 15–17 (TGG), asparagine 127, arginine 163, serine 191, isoleucine 244, 263–268 (ALTVSE), and glutamine 288.

Belongs to the glycosyltransferase 28 family. MurG subfamily.

The protein localises to the cell inner membrane. It catalyses the reaction di-trans,octa-cis-undecaprenyl diphospho-N-acetyl-alpha-D-muramoyl-L-alanyl-D-glutamyl-meso-2,6-diaminopimeloyl-D-alanyl-D-alanine + UDP-N-acetyl-alpha-D-glucosamine = di-trans,octa-cis-undecaprenyl diphospho-[N-acetyl-alpha-D-glucosaminyl-(1-&gt;4)]-N-acetyl-alpha-D-muramoyl-L-alanyl-D-glutamyl-meso-2,6-diaminopimeloyl-D-alanyl-D-alanine + UDP + H(+). It functions in the pathway cell wall biogenesis; peptidoglycan biosynthesis. Functionally, cell wall formation. Catalyzes the transfer of a GlcNAc subunit on undecaprenyl-pyrophosphoryl-MurNAc-pentapeptide (lipid intermediate I) to form undecaprenyl-pyrophosphoryl-MurNAc-(pentapeptide)GlcNAc (lipid intermediate II). This Vibrio cholerae serotype O1 (strain ATCC 39541 / Classical Ogawa 395 / O395) protein is UDP-N-acetylglucosamine--N-acetylmuramyl-(pentapeptide) pyrophosphoryl-undecaprenol N-acetylglucosamine transferase.